The following is a 359-amino-acid chain: WAT1-related protein At5g64700 (359 aa).

The next 10 membrane-spanning stretches (helical) occupy residues 10–30, 37–57, 66–86, 100–120, 135–155, 186–206, 218–238, 256–276, 282–302, and 306–326; these read LMVT…KAVF, FVFV…LAFF, LSFV…TLSL, LAAA…LLFG, LVGI…KGPL, WLKG…WLVL, LYFT…IAIA, AVIY…SWVI, VFLS…SAIL, and IISL…YCVL. 2 consecutive EamA domains span residues 18 to 136 and 198 to 326; these read IYTI…AKLV and ILWG…YCVL.

Belongs to the drug/metabolite transporter (DMT) superfamily. Plant drug/metabolite exporter (P-DME) (TC 2.A.7.4) family.

Its subcellular location is the membrane. This Arabidopsis thaliana (Mouse-ear cress) protein is WAT1-related protein At5g64700.